The primary structure comprises 501 residues: Ribose import ATP-binding protein RbsA (501 aa).

2 ABC transporter domains span residues Leu-5–Lys-241 and Ala-252–Leu-495. Gly-37–Ser-44 lines the ATP pocket.

It belongs to the ABC transporter superfamily. Ribose importer (TC 3.A.1.2.1) family. In terms of assembly, the complex is composed of an ATP-binding protein (RbsA), two transmembrane proteins (RbsC) and a solute-binding protein (RbsB).

Its subcellular location is the cell inner membrane. It carries out the reaction D-ribose(out) + ATP + H2O = D-ribose(in) + ADP + phosphate + H(+). Its function is as follows. Part of the ABC transporter complex RbsABC involved in ribose import. Responsible for energy coupling to the transport system. This chain is Ribose import ATP-binding protein RbsA, found in Salmonella typhi.